An 89-amino-acid chain; its full sequence is Small ribosomal subunit protein uS15 (89 aa).

Belongs to the universal ribosomal protein uS15 family. In terms of assembly, part of the 30S ribosomal subunit. Forms a bridge to the 50S subunit in the 70S ribosome, contacting the 23S rRNA.

Functionally, one of the primary rRNA binding proteins, it binds directly to 16S rRNA where it helps nucleate assembly of the platform of the 30S subunit by binding and bridging several RNA helices of the 16S rRNA. Forms an intersubunit bridge (bridge B4) with the 23S rRNA of the 50S subunit in the ribosome. The sequence is that of Small ribosomal subunit protein uS15 from Frankia alni (strain DSM 45986 / CECT 9034 / ACN14a).